A 268-amino-acid polypeptide reads, in one-letter code: Small ribosomal subunit protein uS2 (268 aa).

This sequence belongs to the universal ribosomal protein uS2 family.

This is Small ribosomal subunit protein uS2 from Caulobacter vibrioides (strain ATCC 19089 / CIP 103742 / CB 15) (Caulobacter crescentus).